The following is a 128-amino-acid chain: Sulfurtransferase TusD (128 aa).

Cysteine 78 functions as the Cysteine persulfide intermediate in the catalytic mechanism.

This sequence belongs to the DsrE/TusD family. In terms of assembly, heterohexamer, formed by a dimer of trimers. The hexameric TusBCD complex contains 2 copies each of TusB, TusC and TusD. The TusBCD complex interacts with TusE.

Its subcellular location is the cytoplasm. Functionally, part of a sulfur-relay system required for 2-thiolation of 5-methylaminomethyl-2-thiouridine (mnm(5)s(2)U) at tRNA wobble positions. Accepts sulfur from TusA and transfers it in turn to TusE. The protein is Sulfurtransferase TusD of Salmonella dublin (strain CT_02021853).